The sequence spans 92 residues: Small ribosomal subunit protein uS19 (92 aa).

The protein belongs to the universal ribosomal protein uS19 family.

In terms of biological role, protein S19 forms a complex with S13 that binds strongly to the 16S ribosomal RNA. The sequence is that of Small ribosomal subunit protein uS19 from Azorhizobium caulinodans (strain ATCC 43989 / DSM 5975 / JCM 20966 / LMG 6465 / NBRC 14845 / NCIMB 13405 / ORS 571).